Consider the following 231-residue polypeptide: RNA pyrophosphohydrolase (231 aa).

Positions 6–149 (GFRPNVGIIL…KRDVYQLALT (144 aa)) constitute a Nudix hydrolase domain. The Nudix box motif lies at 38–59 (GGIKYGETPVQAMYRELHEETG). A disordered region spans residues 157–190 (RPQPRTERPGGHHHGQRYPRMASSVNAPPGASMA).

This sequence belongs to the Nudix hydrolase family. RppH subfamily. A divalent metal cation serves as cofactor.

In terms of biological role, accelerates the degradation of transcripts by removing pyrophosphate from the 5'-end of triphosphorylated RNA, leading to a more labile monophosphorylated state that can stimulate subsequent ribonuclease cleavage. In Paraburkholderia phymatum (strain DSM 17167 / CIP 108236 / LMG 21445 / STM815) (Burkholderia phymatum), this protein is RNA pyrophosphohydrolase.